The primary structure comprises 132 residues: S-protein homolog 15 (132 aa).

Residues 1–20 (MSRLIFFILVTAIYFVGNEA) form the signal peptide.

The protein belongs to the plant self-incompatibility (S1) protein family.

Its subcellular location is the secreted. The sequence is that of S-protein homolog 15 from Arabidopsis thaliana (Mouse-ear cress).